A 274-amino-acid chain; its full sequence is Cytochrome b-c1 complex subunit Rieske, mitochondrial (274 aa).

Residues 79 to 103 (SHTDIKVPDFSDYRRAEVLDSTKSS) are Mitochondrial matrix-facing. Residues 104–140 (KESSEARKGFSYLVTATTTVGVAYAAKNAVSQFVSSM) traverse the membrane as a helical segment. Residues 141–274 (SASADVLAMS…FTSGDVVVVG (134 aa)) are Mitochondrial intermembrane-facing. A Rieske domain is found at 187 to 272 (EAAVEVSQLR…YEFTSGDVVV (86 aa)). [2Fe-2S] cluster is bound by residues C217, H219, C236, H239, and S241. C222 and C238 form a disulfide bridge.

Belongs to the Rieske iron-sulfur protein family. In terms of assembly, component of the ubiquinol-cytochrome c oxidoreductase (cytochrome b-c1 complex, complex III, CIII), a multisubunit enzyme composed of 11 subunits. The complex is composed of 3 respiratory subunits cytochrome b, cytochrome c1 and Rieske protein UQCRFS1, 2 core protein subunits UQCRC1/QCR1 and UQCRC2/QCR2, and 6 low-molecular weight protein subunits UQCRH/QCR6, UQCRB/QCR7, UQCRQ/QCR8, UQCR10/QCR9, UQCR11/QCR10 and subunit 9, the cleavage product of Rieske protein UQCRFS1. The complex exists as an obligatory dimer and forms supercomplexes (SCs) in the inner mitochondrial membrane with NADH-ubiquinone oxidoreductase (complex I, CI) and cytochrome c oxidase (complex IV, CIV), resulting in different assemblies (supercomplex SCI(1)III(2)IV(1) and megacomplex MCI(2)III(2)IV(2)). Incorporation of the Rieske protein UQCRFS1 is the penultimate step in complex III assembly. Interacts with TTC19, which is involved in the clearance of UQCRFS1 fragments. Component of the ubiquinol-cytochrome c oxidoreductase (cytochrome b-c1 complex, complex III, CIII). Subunit 9 corresponds to the mitochondrial targeting sequence (MTS) of Rieske protein UQCRFS1. It is retained after processing and incorporated inside complex III, where it remains bound to the complex and localizes between the 2 core subunits UQCRC1/QCR1 and UQCRC2/QCR2. [2Fe-2S] cluster serves as cofactor. In terms of processing, proteolytic processing is necessary for the correct insertion of UQCRFS1 in the complex III dimer. Several fragments are generated during UQCRFS1 insertion, most probably due to the endogenous matrix-processing peptidase (MPP) activity of the 2 core protein subunits UQCRC1/QCR1 and UQCRC2/QCR2, which are homologous to the 2 mitochondrial-processing peptidase (MPP) subunits beta-MPP and alpha-MPP respectively. The action of the protease is also necessary for the clearance of the UQCRFS1 fragments.

The protein resides in the mitochondrion inner membrane. It carries out the reaction a quinol + 2 Fe(III)-[cytochrome c](out) = a quinone + 2 Fe(II)-[cytochrome c](out) + 2 H(+)(out). Functionally, component of the ubiquinol-cytochrome c oxidoreductase, a multisubunit transmembrane complex that is part of the mitochondrial electron transport chain which drives oxidative phosphorylation. The respiratory chain contains 3 multisubunit complexes succinate dehydrogenase (complex II, CII), ubiquinol-cytochrome c oxidoreductase (cytochrome b-c1 complex, complex III, CIII) and cytochrome c oxidase (complex IV, CIV), that cooperate to transfer electrons derived from NADH and succinate to molecular oxygen, creating an electrochemical gradient over the inner membrane that drives transmembrane transport and the ATP synthase. The cytochrome b-c1 complex catalyzes electron transfer from ubiquinol to cytochrome c, linking this redox reaction to translocation of protons across the mitochondrial inner membrane, with protons being carried across the membrane as hydrogens on the quinol. In the process called Q cycle, 2 protons are consumed from the matrix, 4 protons are released into the intermembrane space and 2 electrons are passed to cytochrome c. The Rieske protein is a catalytic core subunit containing a [2Fe-2S] iron-sulfur cluster. It cycles between 2 conformational states during catalysis to transfer electrons from the quinol bound in the Q(0) site in cytochrome b to cytochrome c1. Incorporation of UQCRFS1 is the penultimate step in complex III assembly. In terms of biological role, component of the ubiquinol-cytochrome c oxidoreductase (cytochrome b-c1 complex, complex III, CIII). UQCRFS1 undergoes proteolytic processing once it is incorporated in the complex III dimer. One of the fragments, called subunit 9, corresponds to its mitochondrial targeting sequence (MTS). The proteolytic processing is necessary for the correct insertion of UQCRFS1 in the complex III dimer, but the persistence of UQCRFS1-derived fragments may prevent newly imported UQCRFS1 to be processed and assembled into complex III and is detrimental for the complex III structure and function. This is Cytochrome b-c1 complex subunit Rieske, mitochondrial (Uqcrfs1) from Rattus norvegicus (Rat).